The sequence spans 260 residues: Proline-rich protein 33 (260 aa).

The disordered stretch occupies residues 29-132 (GVQTVSPRPE…KVAPKPSRSG (104 aa)). Residues 73–83 (GPSPYSPPPAA) show a composition bias toward pro residues.

The chain is Proline-rich protein 33 (Prr33) from Mus musculus (Mouse).